A 137-amino-acid polypeptide reads, in one-letter code: Peptide methionine sulfoxide reductase MsrB (137 aa).

One can recognise a MsrB domain in the interval Ala-7–Glu-129. The Zn(2+) site is built by Cys-46, Cys-49, Cys-95, and Cys-98. The active-site Nucleophile is the Cys-118.

The protein belongs to the MsrB Met sulfoxide reductase family. Requires Zn(2+) as cofactor.

The enzyme catalyses L-methionyl-[protein] + [thioredoxin]-disulfide + H2O = L-methionyl-(R)-S-oxide-[protein] + [thioredoxin]-dithiol. The protein is Peptide methionine sulfoxide reductase MsrB of Salmonella agona (strain SL483).